The sequence spans 412 residues: Protein arginine N-methyltransferase 2 (412 aa).

Basic and acidic residues predominate over residues 48-65 (EKNRNGDKEFRESTDDNK). Disordered regions lie at residues 48–69 (EKNR…TSNT) and 169–189 (SVQT…DDAT). 2 positions are modified to phosphoserine: S181 and S184. The 224-residue stretch at 189–412 (TAANQQVYLK…YYYHPRITFA (224 aa)) folds into the RMT2 domain. S-adenosyl-L-methionine is bound by residues Y196, M226, 250–255 (FGMGII), 271–273 (EAH), 298–299 (WQ), and D319.

Belongs to the class I-like SAM-binding methyltransferase superfamily. RMT2 methyltransferase family. As to quaternary structure, monomer. Interacts with nucleoporins NUP49, NUP57 and NUP100.

It localises to the cytoplasm. The protein localises to the nucleus. Its function is as follows. S-adenosyl-L-methionine-dependent protein-arginine N-methyltransferase that methylates the delta-nitrogen atom of arginine residues to form N5-methylarginine (type IV) in target proteins. Monomethylates ribosomal protein L12 (RPL12A/RPL12B) at 'Arg-67'. The protein is Protein arginine N-methyltransferase 2 of Saccharomyces cerevisiae (strain ATCC 204508 / S288c) (Baker's yeast).